The chain runs to 96 residues: Beta-defensin 20 (96 aa).

The N-terminal stretch at methionine 1–proline 21 is a signal peptide. Cystine bridges form between cysteine 24–cysteine 52, cysteine 32–cysteine 46, and cysteine 36–cysteine 53.

Belongs to the beta-defensin family.

Its subcellular location is the secreted. In terms of biological role, has antibacterial activity. This is Beta-defensin 20 (Defb20) from Mus musculus (Mouse).